Reading from the N-terminus, the 423-residue chain is CinA-like protein (423 aa).

The protein belongs to the CinA family.

The chain is CinA-like protein from Prochlorococcus marinus (strain SARG / CCMP1375 / SS120).